Here is a 574-residue protein sequence, read N- to C-terminus: Cytochrome P450 306a1 (574 aa).

The segment covering Glu-303–Asp-314 has biased composition (basic and acidic residues). The segment at Glu-303–Asp-333 is disordered. A compositionally biased stretch (acidic residues) spans Ser-320 to Asp-333. Cys-505 contacts heme.

Belongs to the cytochrome P450 family. The cofactor is heme. First seen at the early (syncytial) blastoderm stage 4. During cellularization of the blastoderm (stage 5), stripes of expression appear and remain through to stage 10. Expression becomes undetectable during germ band retraction (stages 11-14). By stage 15, some expression resumes in the primordium of the ring gland, so that by stage 17 strong expression is seen, but only in the ring gland. This specific localization continues throughout the larval instars (at protein level). Expressed in the prothoracic gland cells of the larval ring gland (RG). Levels decline just after the molt to the third instar then increase later during the wandering stage. Low levels of expression are seen in the larval brain and fat body. In the adult, majority of expression is restricted to the ovaries, with low levels in the head and carcass of both sexes.

It is found in the endoplasmic reticulum membrane. Its subcellular location is the microsome membrane. The catalysed reaction is 2,22,25-trideoxyecdysone + 2 reduced [adrenodoxin] + O2 + 2 H(+) = 2,22-dideoxyecdysone + 2 oxidized [adrenodoxin] + H2O. It functions in the pathway steroid biosynthesis; ecdysteroid biosynthesis. Involved in the metabolism of insect hormones; responsible for ecdysteroid C25-hydroxylase activity. May be involved in the breakdown of synthetic insecticides. This chain is Cytochrome P450 306a1, found in Drosophila melanogaster (Fruit fly).